The chain runs to 36 residues: Glucagon-2 (36 aa).

This sequence belongs to the glucagon family.

It localises to the secreted. Glucagon plays a key role in glucose metabolism and homeostasis. Regulates blood glucose by increasing gluconeogenesis and decreasing glycolysis. The sequence is that of Glucagon-2 from Huso dauricus (Kaluga sturgeon).